The sequence spans 310 residues: Coproporphyrin III ferrochelatase (310 aa).

Y13 lines the Fe-coproporphyrin III pocket. Y13 serves as a coordination point for N-methylmesoporphyrin. E20 lines the Mg(2+) pocket. R30 contacts Fe-coproporphyrin III. N-methylmesoporphyrin is bound at residue 31–33 (RGR). R46 serves as a coordination point for Mg(2+). Residues 46-47 (RY), S54, and Y125 each bind Fe-coproporphyrin III. Residues H183 and K188 each coordinate N-methylmesoporphyrin. Fe(2+) is bound at residue H183. E264 is a Fe(2+) binding site. Residues D268 and E272 each coordinate Mg(2+).

Belongs to the ferrochelatase family. In terms of assembly, monomer. Interacts with frataxin/Fra.

It is found in the cytoplasm. It catalyses the reaction Fe-coproporphyrin III + 2 H(+) = coproporphyrin III + Fe(2+). The protein operates within porphyrin-containing compound metabolism; protoheme biosynthesis. Its activity is regulated as follows. Stimulated by Mg(2+). Inhibited by Cd(2+). Inhibited by N-methylmesoporphyrin (N-MeMP) and 2,4-disulfonic acid deuteroporphyrin IX (dSDP). Functionally, involved in coproporphyrin-dependent heme b biosynthesis. Catalyzes the insertion of ferrous iron into coproporphyrin III to form Fe-coproporphyrin III. It can also insert iron into protoporphyrin IX. Has weaker activity with 2,4 disulfonate, deuteroporphyrin and 2,4 hydroxyethyl. In vitro, can also use Zn(2+) or Cu(2+). In Bacillus subtilis (strain 168), this protein is Coproporphyrin III ferrochelatase.